We begin with the raw amino-acid sequence, 135 residues long: UPF0102 protein Mjls_1965 (135 aa).

It belongs to the UPF0102 family.

This Mycobacterium sp. (strain JLS) protein is UPF0102 protein Mjls_1965.